The following is a 339-amino-acid chain: Glycerol-3-phosphate dehydrogenase [NAD(P)+] (339 aa).

Positions 15, 16, 36, and 110 each coordinate NADPH. Positions 110, 139, and 141 each coordinate sn-glycerol 3-phosphate. Residue Ala-143 coordinates NADPH. Sn-glycerol 3-phosphate is bound by residues Lys-195, Asp-248, Ser-258, Arg-259, and Asn-260. The active-site Proton acceptor is Lys-195. An NADPH-binding site is contributed by Arg-259. NADPH is bound by residues Val-283 and Glu-285.

The protein belongs to the NAD-dependent glycerol-3-phosphate dehydrogenase family.

Its subcellular location is the cytoplasm. The enzyme catalyses sn-glycerol 3-phosphate + NAD(+) = dihydroxyacetone phosphate + NADH + H(+). It carries out the reaction sn-glycerol 3-phosphate + NADP(+) = dihydroxyacetone phosphate + NADPH + H(+). Its pathway is membrane lipid metabolism; glycerophospholipid metabolism. Functionally, catalyzes the reduction of the glycolytic intermediate dihydroxyacetone phosphate (DHAP) to sn-glycerol 3-phosphate (G3P), the key precursor for phospholipid synthesis. In Yersinia pseudotuberculosis serotype O:1b (strain IP 31758), this protein is Glycerol-3-phosphate dehydrogenase [NAD(P)+].